Reading from the N-terminus, the 131-residue chain is MSDKYQQRRFDIYGYEKIDTEVLEAIPYEYPEKNTVVEYITEEFSSVCPWTGLPDTAKLTIRYIPHQKLVELKSLKYYLTSYRNVGILQEHAVNRILDDLVKLLEPKFMEVIGEFHERGGISTKVVARYEK.

Residue Cys-48 is the Thioimide intermediate of the active site. Catalysis depends on Asp-55, which acts as the Proton donor. Substrate-binding positions include 70–72 (VEL) and 89–90 (QE).

It belongs to the GTP cyclohydrolase I family. QueF type 1 subfamily.

Its subcellular location is the cytoplasm. The enzyme catalyses 7-aminomethyl-7-carbaguanine + 2 NADP(+) = 7-cyano-7-deazaguanine + 2 NADPH + 3 H(+). The protein operates within tRNA modification; tRNA-queuosine biosynthesis. Its function is as follows. Catalyzes the NADPH-dependent reduction of 7-cyano-7-deazaguanine (preQ0) to 7-aminomethyl-7-deazaguanine (preQ1). This Caldicellulosiruptor bescii (strain ATCC BAA-1888 / DSM 6725 / KCTC 15123 / Z-1320) (Anaerocellum thermophilum) protein is NADPH-dependent 7-cyano-7-deazaguanine reductase.